The sequence spans 414 residues: Seminal vesicle secretory protein 2 (414 aa).

The signal sequence occupies residues 1-22 (MKSSVFILSLFLLLERQAAVVG). Gln23 carries the pyrrolidone carboxylic acid modification. 13 repeat units span residues 108-120 (ESQI…VKSS), 127-139 (GSQL…VKSS), 140-152 (ESQL…VKAS), 153-165 (GSQL…VKAS), 166-178 (GSQL…MKSS), 179-191 (GSQV…MKSS), 192-204 (GSQV…MKAS), 205-217 (ESQI…RKSQ), 224-236 (YGQM…TKSL), 237-249 (ESQA…VKSQ), 257-269 (YGQR…ETQL), 275-287 (DAQL…QKSQ), and 299-311 (SAQL…QKSL). The tract at residues 108–311 (ESQIKSFRQV…LKSFGQQKSL (204 aa)) is 13 X 13 AA tandem repeats. Disordered regions lie at residues 170–228 (KSYG…GQMK), 240–294 (AKSF…SFSQ), and 306–369 (GQQK…FGQE). Positions 240–259 (AKSFGQVKSQSGQMKSSYGQ) are enriched in polar residues. Residues 277–294 (QLKSYGQQKSQKQSSFSQ) show a composition bias toward low complexity. Polar residues-rich tracts occupy residues 306–321 (GQQK…TQQK) and 342–351 (SVQQKSTQQM). Over residues 358–369 (SQFGQQRQFGQE) the composition is skewed to low complexity.

In terms of processing, the repeating unit appears to be involved in the formation of the copulatory plug via a transglutaminase reaction cross-linking glutamine and lysine residues.

In terms of biological role, the rat seminal vesicle contains six major androgen-dependent secretory proteins referred to as SVS I-VI. The SVS I-III proteins appear to be components of the rat copulatory plug, with the SVS II protein being the major component. The sequence is that of Seminal vesicle secretory protein 2 (Svs2) from Rattus norvegicus (Rat).